A 226-amino-acid polypeptide reads, in one-letter code: Large ribosomal subunit protein uL1 (226 aa).

The protein belongs to the universal ribosomal protein uL1 family. Part of the 50S ribosomal subunit.

In terms of biological role, binds directly to 23S rRNA. The L1 stalk is quite mobile in the ribosome, and is involved in E site tRNA release. Protein L1 is also a translational repressor protein, it controls the translation of the L11 operon by binding to its mRNA. This chain is Large ribosomal subunit protein uL1, found in Borreliella afzelii (strain PKo) (Borrelia afzelii).